We begin with the raw amino-acid sequence, 2523 residues long: Non-reducing polyketide synthase Preu3 (2523 aa).

The interval 58-247 (LQSLASERRA…KILAMTGSFH (190 aa)) is N-terminal acylcarrier protein transacylase domain (SAT). Residues 373–792 (DNAVAVVGMA…GSNGAMIVCQ (420 aa)) form the Ketosynthase family 3 (KS3) domain. Catalysis depends on for beta-ketoacyl synthase activity residues Cys539, His674, and His715. Residues 900-1207 (CFGGQVKAFV…KAFGSLADAT (308 aa)) are malonyl-CoA:ACP transacylase (MAT) domain. Catalysis depends on Ser986, which acts as the For acyl/malonyl transferase activity. Residues 1271–1398 (HELLTFSSFE…GLVAFGGTVE (128 aa)) are N-terminal hotdog fold. The region spanning 1271-1573 (HELLTFSSFE…FTRVTVPGLR (303 aa)) is the PKS/mFAS DH domain. The tract at residues 1301–1568 (LVKGHAVVAQ…ALGCRFTRVT (268 aa)) is product template (PT) domain. The Proton acceptor; for dehydratase activity role is filled by His1305. Residues 1421–1573 (ECDALRGSAT…FTRVTVPGLR (153 aa)) are C-terminal hotdog fold. Asp1483 (proton donor; for dehydratase activity) is an active-site residue. The disordered stretch occupies residues 1579 to 1601 (ANGDARAQERPSGSRISPSPLAP). Residues 1639 to 1713 (VDYLAQVKAL…KLAEYLAKTL (75 aa)) enclose the Carrier domain. O-(pantetheine 4'-phosphoryl)serine is present on Ser1673. The disordered stretch occupies residues 1735–1757 (DAEQSSDESPYDSTDDSASGYGD). Acidic residues predominate over residues 1738-1749 (QSSDESPYDSTD). The interval 1986-2085 (LEIGGGTGGT…MRQLLSSEGF (100 aa)) is methyltransferase (CMeT) domain. Residues 2218-2520 (LILHGGGHVL…RALEWLVEQC (303 aa)) form a thioesterase (TE) domain region.

The cofactor is pantetheine 4'-phosphate.

The catalysed reaction is 3 malonyl-CoA + acetyl-CoA + S-adenosyl-L-methionine + H(+) = 3-methylorsellinate + S-adenosyl-L-homocysteine + 3 CO2 + 4 CoA. In terms of biological role, non-reducing polyketide synthase; part of a gene cluster that mediates the biosynthesis of a yet unidentified natural product. The first step in the pathway is performed by Preu3 that condenses one acetyl-CoA starter unit with 3 malonyl-CoA units. Preu3 also catalyzes one methylation step to produce 3-methylorsellinate, an intermediate that exhibits significant antibacterial activities against methicillin-resistant Staphylococcus aureus, multidrug-resistant Enterococcus faecalis, multidrug-resistant Enterococcus faecium, and multidrug-resistant Staphylococcus epidermidis. The chain is Non-reducing polyketide synthase Preu3 from Preussia isomera (Coprophilous fungus).